Consider the following 1055-residue polypeptide: cAMP and cAMP-inhibited cGMP 3',5'-cyclic phosphodiesterase 10A (1055 aa).

Disordered stretches follow at residues 1-90 (MASL…RGGG), 151-193 (AAAA…GRRR), and 205-250 (LPAR…RPQG). 2 stretches are compositionally biased toward gly residues: residues 79–90 (GGPGALSARGGG) and 154–168 (AGGGGDAGGGGGGGQ). Over residues 220 to 231 (PLGQAARRAGSP) the composition is skewed to low complexity. Residues 232 to 243 (GFPGAGPGGGGQ) show a composition bias toward gly residues. Thr282 carries the post-translational modification Phosphothreonine. 2 consecutive GAF domains span residues 367–510 (DNQL…SVAI) and 542–688 (AIDS…ALAL). Residues 562 to 563 (RC), 606 to 607 (IA), Thr640, Gln659, and His791 contribute to the 3',5'-cyclic AMP site. Positions 718 to 1035 (TSEEWQGLMQ…SQWEKVIRGE (318 aa)) constitute a PDEase domain. The active-site Proton donor is His791. His791 lines the 3',5'-cyclic GMP pocket. His795, His829, Asp830, and Asp940 together coordinate a divalent metal cation. Residue Gln992 participates in 3',5'-cyclic AMP binding. Residue Gln992 coordinates 3',5'-cyclic GMP.

This sequence belongs to the cyclic nucleotide phosphodiesterase family. In terms of assembly, homodimer. A divalent metal cation serves as cofactor. Post-translationally, phosphorylated on Thr-16. As to expression, abundant in the putamen and caudate nucleus regions of brain and testis, moderately expressed in the thyroid gland, pituitary gland, thalamus and cerebellum.

Its subcellular location is the cytoplasm. It is found in the cytosol. The enzyme catalyses a nucleoside 3',5'-cyclic phosphate + H2O = a nucleoside 5'-phosphate + H(+). It carries out the reaction 3',5'-cyclic AMP + H2O = AMP + H(+). It catalyses the reaction 3',5'-cyclic GMP + H2O = GMP + H(+). Its pathway is purine metabolism; 3',5'-cyclic AMP degradation; AMP from 3',5'-cyclic AMP: step 1/1. It functions in the pathway purine metabolism; 3',5'-cyclic GMP degradation; GMP from 3',5'-cyclic GMP: step 1/1. Its activity is regulated as follows. Inhibited by dipyridamole and moderately by IBMX. cGMP acts as an allosteric activator. Plays a role in signal transduction by regulating the intracellular concentration of cyclic nucleotides. Can hydrolyze both cAMP and cGMP, but has higher affinity for cAMP and is more efficient with cAMP as substrate. May play a critical role in regulating cAMP and cGMP levels in the striatum, a region of the brain that contributes to the control of movement and cognition. This is cAMP and cAMP-inhibited cGMP 3',5'-cyclic phosphodiesterase 10A (PDE10A) from Homo sapiens (Human).